The primary structure comprises 467 residues: Peptidoglycan-N-acetylmuramic acid deacetylase PdaC (467 aa).

Residues 6–26 (IKWFHVLIAVVCVVGLIGFFH) form a helical membrane-spanning segment. One can recognise a NodB homology domain in the interval 278–452 (KVIALTFDDG…KLTDQGYQLV (175 aa)). Catalysis depends on Asp-285, which acts as the Proton acceptor. A divalent metal cation contacts are provided by Asp-286, His-336, and His-340. His-427 acts as the Proton donor in catalysis.

It in the N-terminal section; belongs to the RsiV family. In the C-terminal section; belongs to the polysaccharide deacetylase family.

It localises to the cell membrane. With respect to regulation, activated by divalent metal cations; Mn(2+) is the most efficient, followed by Ca(2+) and Mg(2+). In contrast to PgdA from S.pneumoniae, these ions are not absolutely required for deacetylase activity. Functionally, catalyzes the deacetylation of N-acetylmuramic acid (MurNAc) residues in peptidoglycan, a modification that confers resistance to lysosyme. Is not able to deacetylate N-acetylglucosamine (GlcNAc) residues in peptidoglycan, but can deacylate chitin oligomers such as GlcNAc4 and GlcNAc5. Is essentially not active toward chitosan (partially deacetylated GlcNAc polymer) and has very low activity toward chitin (GlcNAc polymer). Does not deacetylate GlcNAc. The chain is Peptidoglycan-N-acetylmuramic acid deacetylase PdaC (pdaC) from Bacillus subtilis (strain 168).